The sequence spans 360 residues: Photosystem II protein D1 (360 aa).

Helical transmembrane passes span 29–46 (YIGW…TATS), 118–133 (HFLL…EWEL), and 142–156 (WISV…AAAA). H118 is a binding site for chlorophyll a. A pheophytin a-binding site is contributed by Y126. [CaMn4O5] cluster contacts are provided by D170 and E189. A helical transmembrane segment spans residues 197–218 (FHQLGVAGVFGGSLFSAMHGSL). H198 is a binding site for chlorophyll a. Residues H215 and 264–265 (SF) each bind a quinone. Position 215 (H215) interacts with Fe cation. Residue H272 coordinates Fe cation. A helical transmembrane segment spans residues 274–288 (FLGLWPVVGIWFTAM). Residues H332, E333, D342, and A344 each contribute to the [CaMn4O5] cluster site. The propeptide occupies 345–360 (SSNSLPVSLVAPSVNG).

Belongs to the reaction center PufL/M/PsbA/D family. In terms of assembly, PSII is composed of 1 copy each of membrane proteins PsbA, PsbB, PsbC, PsbD, PsbE, PsbF, PsbH, PsbI, PsbJ, PsbK, PsbL, PsbM, PsbT, PsbX, PsbY, PsbZ, Psb30/Ycf12, at least 3 peripheral proteins of the oxygen-evolving complex and a large number of cofactors. It forms dimeric complexes. The D1/D2 heterodimer binds P680, chlorophylls that are the primary electron donor of PSII, and subsequent electron acceptors. It shares a non-heme iron and each subunit binds pheophytin, quinone, additional chlorophylls, carotenoids and lipids. D1 provides most of the ligands for the Mn4-Ca-O5 cluster of the oxygen-evolving complex (OEC). There is also a Cl(-1) ion associated with D1 and D2, which is required for oxygen evolution. The PSII complex binds additional chlorophylls, carotenoids and specific lipids. is required as a cofactor. Tyr-161 forms a radical intermediate that is referred to as redox-active TyrZ, YZ or Y-Z. In terms of processing, C-terminally processed by CTPA; processing is essential to allow assembly of the oxygen-evolving complex and thus photosynthetic growth.

Its subcellular location is the plastid. The protein localises to the chloroplast thylakoid membrane. The catalysed reaction is 2 a plastoquinone + 4 hnu + 2 H2O = 2 a plastoquinol + O2. Functionally, photosystem II (PSII) is a light-driven water:plastoquinone oxidoreductase that uses light energy to abstract electrons from H(2)O, generating O(2) and a proton gradient subsequently used for ATP formation. It consists of a core antenna complex that captures photons, and an electron transfer chain that converts photonic excitation into a charge separation. The D1/D2 (PsbA/PsbD) reaction center heterodimer binds P680, the primary electron donor of PSII as well as several subsequent electron acceptors. This Gracilaria tenuistipitata var. liui (Red alga) protein is Photosystem II protein D1.